Consider the following 346-residue polypeptide: Phosphoribosylformylglycinamidine cyclo-ligase (346 aa).

Belongs to the AIR synthase family.

The protein resides in the cytoplasm. The catalysed reaction is 2-formamido-N(1)-(5-O-phospho-beta-D-ribosyl)acetamidine + ATP = 5-amino-1-(5-phospho-beta-D-ribosyl)imidazole + ADP + phosphate + H(+). It functions in the pathway purine metabolism; IMP biosynthesis via de novo pathway; 5-amino-1-(5-phospho-D-ribosyl)imidazole from N(2)-formyl-N(1)-(5-phospho-D-ribosyl)glycinamide: step 2/2. The chain is Phosphoribosylformylglycinamidine cyclo-ligase from Shewanella pealeana (strain ATCC 700345 / ANG-SQ1).